The primary structure comprises 2462 residues: Non-reducing polyketide synthase ausA (2462 aa).

An N-terminal acylcarrier protein transacylase domain (SAT) region spans residues 16-253 (VFFGPVYPEL…HTADHIPAMK (238 aa)). A Ketosynthase family 3 (KS3) domain is found at 385-801 (SAPIAVTGFA…GSNAVIVVKE (417 aa)). Active-site for beta-ketoacyl synthase activity residues include C550, H685, and H724. Residues 904–1208 (LCFGGQTGDT…LPIDLQESTA (305 aa)) are malonyl-CoA:ACP transacylase (MAT) domain. S991 (for acyl/malonyl transferase activity) is an active-site residue. An N-terminal hotdog fold region spans residues 1274-1403 (HDDGLLQLVE…GKVLLDPQAA (130 aa)). The PKS/mFAS DH domain maps to 1274–1581 (HDDGLLQLVE…FTSVSIQSLK (308 aa)). The segment at 1277–1580 (GLLQLVERDA…TFTSVSIQSL (304 aa)) is product template (PT) domain. Catalysis depends on H1307, which acts as the Proton acceptor; for dehydratase activity. Residues 1431–1581 (SSNGLKRATV…FTSVSIQSLK (151 aa)) form a C-terminal hotdog fold region. Residue D1489 is the Proton donor; for dehydratase activity of the active site. A Carrier domain is found at 1613 to 1690 (VSDDHHLRAV…GLAHRISPSS (78 aa)). S1650 is subject to O-(pantetheine 4'-phosphoryl)serine. The segment at 1850–2083 (QHASEHKLLR…GFNWVDWTDN (234 aa)) is methyltransferase (CMeT) domain. The interval 2112-2462 (TPARVETVRY…YEFLRQHVAV (351 aa)) is thioesterase (TE) domain. Residues S2235, D2398, and H2430 each act as for thioesterase activity in the active site.

The enzyme catalyses 3 malonyl-CoA + acetyl-CoA + 2 S-adenosyl-L-methionine = 3,5-dimethylorsellinate + 2 S-adenosyl-L-homocysteine + 3 CO2 + 4 CoA. It functions in the pathway secondary metabolite biosynthesis; terpenoid biosynthesis. In terms of biological role, non-reducing polyketide synthase; part of the gene cluster that mediates the biosynthesis of calidodehydroaustin, a fungal meroterpenoid. The first step of the pathway is the synthesis of 3,5-dimethylorsellinic acid by the polyketide synthase ausA. 3,5-dimethylorsellinic acid is then prenylated by the polyprenyl transferase ausN. Further epoxidation by the FAD-dependent monooxygenase ausM and cyclization by the probable terpene cyclase ausL lead to the formation of protoaustinoid A. Protoaustinoid A is then oxidized to spiro-lactone preaustinoid A3 by the combined action of the FAD-binding monooxygenases ausB and ausC, and the dioxygenase ausE. Acid-catalyzed keto-rearrangement and ring contraction of the tetraketide portion of preaustinoid A3 by ausJ lead to the formation of preaustinoid A4. The aldo-keto reductase ausK, with the help of ausH, is involved in the next step by transforming preaustinoid A4 into isoaustinone which is in turn hydroxylated by the P450 monooxygenase ausI to form austinolide. The cytochrome P450 monooxygenase ausG modifies austinolide to austinol. Austinol is further acetylated to austin by the O-acetyltransferase ausP, which spontaneously changes to dehydroaustin. The cytochrome P450 monooxygenase ausR then converts dehydroaustin is into 7-dehydrodehydroaustin. The hydroxylation catalyzed by ausR permits the O-acetyltransferase ausQ to add an additional acetyl group to the molecule, leading to the formation of acetoxydehydroaustin. The short chain dehydrogenase ausT catalyzes the reduction of the double bond present between carbon atoms 1 and 2 to convert 7-dehydrodehydroaustin into 1,2-dihydro-7-hydroxydehydroaustin. AusQ catalyzes not only an acetylation reaction but also the addition of the PKS ausV diketide product to 1,2-dihydro-7-hydroxydehydroaustin, forming precalidodehydroaustin. Finally, the iron/alpha-ketoglutarate-dependent dioxygenase converts precalidodehydroaustin into calidodehydroaustin. The chain is Non-reducing polyketide synthase ausA from Aspergillus calidoustus.